The following is a 194-amino-acid chain: Protein GrpE (194 aa).

The segment covering 1-14 has biased composition (basic and acidic residues); that stretch reads MSKMNPNEKKENAS. Residues 1 to 48 are disordered; that stretch reads MSKMNPNEKKENASKNENVNNEEATNLQEEQSNAADEAAGSDNVSGEV. Over residues 24–34 the composition is skewed to polar residues; sequence ATNLQEEQSNA.

It belongs to the GrpE family. Homodimer.

Its subcellular location is the cytoplasm. Functionally, participates actively in the response to hyperosmotic and heat shock by preventing the aggregation of stress-denatured proteins, in association with DnaK and GrpE. It is the nucleotide exchange factor for DnaK and may function as a thermosensor. Unfolded proteins bind initially to DnaJ; upon interaction with the DnaJ-bound protein, DnaK hydrolyzes its bound ATP, resulting in the formation of a stable complex. GrpE releases ADP from DnaK; ATP binding to DnaK triggers the release of the substrate protein, thus completing the reaction cycle. Several rounds of ATP-dependent interactions between DnaJ, DnaK and GrpE are required for fully efficient folding. The chain is Protein GrpE from Parabacteroides distasonis (strain ATCC 8503 / DSM 20701 / CIP 104284 / JCM 5825 / NCTC 11152).